Reading from the N-terminus, the 324-residue chain is Elongation factor P--(R)-beta-lysine ligase (324 aa).

A substrate-binding site is contributed by 75–77 (SPE). ATP is bound by residues 99 to 101 (RNK) and asparagine 108. Tyrosine 117 contacts substrate. Residue 243 to 244 (EL) coordinates ATP. Glutamate 250 is a substrate binding site. Glycine 299 provides a ligand contact to ATP.

The protein belongs to the class-II aminoacyl-tRNA synthetase family. EpmA subfamily. As to quaternary structure, homodimer.

It catalyses the reaction D-beta-lysine + L-lysyl-[protein] + ATP = N(6)-((3R)-3,6-diaminohexanoyl)-L-lysyl-[protein] + AMP + diphosphate + H(+). Functionally, with EpmB is involved in the beta-lysylation step of the post-translational modification of translation elongation factor P (EF-P). Catalyzes the ATP-dependent activation of (R)-beta-lysine produced by EpmB, forming a lysyl-adenylate, from which the beta-lysyl moiety is then transferred to the epsilon-amino group of a conserved specific lysine residue in EF-P. This Buchnera aphidicola subsp. Acyrthosiphon pisum (strain APS) (Acyrthosiphon pisum symbiotic bacterium) protein is Elongation factor P--(R)-beta-lysine ligase.